The primary structure comprises 95 residues: Small ubiquitin-related modifier 4 (95 aa).

The region spanning 17-95 (HINLKVAGQD…VLQQQTGGVY (79 aa)) is the Ubiquitin-like domain. A Glycyl lysine isopeptide (Gly-Lys) (interchain with K-? in acceptor proteins) cross-link involves residue Gly-93. Positions 94-95 (VY) are excised as a propeptide.

The protein belongs to the ubiquitin family. SUMO subfamily. As to quaternary structure, interacts with SAE2. Covalently attached to a number of proteins.

Ubiquitin-like protein which can be covalently attached to target lysines as a monomer. Does not seem to be involved in protein degradation and may modulate protein subcellular localization, stability or activity. Upon oxidative stress, conjugates to various anti-oxidant enzymes, chaperones, and stress defense proteins. May also conjugate to NFKBIA, TFAP2A and FOS, negatively regulating their transcriptional activity, and to NR3C1, positively regulating its transcriptional activity. Covalent attachment to its substrates requires prior activation by the E1 complex SAE1-SAE2 and linkage to the E2 enzyme UBE2I. This is Small ubiquitin-related modifier 4 (SUMO4) from Sus scrofa (Pig).